A 469-amino-acid chain; its full sequence is 3-isopropylmalate dehydratase large subunit (469 aa).

[4Fe-4S] cluster-binding residues include Cys347, Cys408, and Cys411.

This sequence belongs to the aconitase/IPM isomerase family. LeuC type 1 subfamily. Heterodimer of LeuC and LeuD. [4Fe-4S] cluster is required as a cofactor.

It carries out the reaction (2R,3S)-3-isopropylmalate = (2S)-2-isopropylmalate. It participates in amino-acid biosynthesis; L-leucine biosynthesis; L-leucine from 3-methyl-2-oxobutanoate: step 2/4. Catalyzes the isomerization between 2-isopropylmalate and 3-isopropylmalate, via the formation of 2-isopropylmaleate. The polypeptide is 3-isopropylmalate dehydratase large subunit (Actinobacillus pleuropneumoniae serotype 7 (strain AP76)).